The following is a 97-amino-acid chain: Putative pterin-4-alpha-carbinolamine dehydratase (97 aa).

It belongs to the pterin-4-alpha-carbinolamine dehydratase family.

It catalyses the reaction (4aS,6R)-4a-hydroxy-L-erythro-5,6,7,8-tetrahydrobiopterin = (6R)-L-erythro-6,7-dihydrobiopterin + H2O. The sequence is that of Putative pterin-4-alpha-carbinolamine dehydratase from Brucella abortus (strain S19).